The primary structure comprises 116 residues: SPbeta prophage-derived uncharacterized protein YoqA (116 aa).

This chain is SPbeta prophage-derived uncharacterized protein YoqA (yoqA), found in Bacillus subtilis (strain 168).